Consider the following 464-residue polypeptide: MFRHHPTRGRRTAGLLAAALATLSAGLTAVAPAHPARADTATLGELAEAKGRYFGSATDNPELPDTQYTQILGSEFSQITVGNTMKWQYTEPSRGRFDYTAAEEIVDLAESNGQSVRGHTLVWHNQLPSWVDDVPAGELLGVMRDHITHEVDHFKGRLIHWDVVNEAFEEDGSRRQSVFQQKIGDSYIAEAFKAARAADPDVKLYYNDYNIEGIGPKSDAVYEMVKSFKAQGIPIDGVGMQAHLIAGQVPASLQENIRRFADLGVDVALTELDIRMTLPRTAAKDAQQATDYGAVVEACLVVSRCVGITVWDYTDKYSWVPSVFPGQGAALPWDEDFAKKPAYHAIAAALNGGSPAPGGNCTATYRVTSQWQGGFTAEITVGNDHTAPITGWTVTWTLSSGQSISHMWNGNLTVNGQDVTVRDVGYNGTLGGNGSTTFGFQGEGVADTPADVTCTPGRPSGTSA.

The first 33 residues, 1 to 33, serve as a signal peptide directing secretion; the sequence is MFRHHPTRGRRTAGLLAAALATLSAGLTAVAPA. In terms of domain architecture, GH10 spans 40 to 349; the sequence is TATLGELAEA…KPAYHAIAAA (310 aa). The Proton donor role is filled by Glu166. The active-site Nucleophile is the Glu271. The 104-residue stretch at 354 to 457 folds into the CBM2 domain; sequence SPAPGGNCTA…TPADVTCTPG (104 aa).

It belongs to the glycosyl hydrolase 10 (cellulase F) family. It depends on Does not require any standard metal (Mg(2+), Mn2(+), Ca(2+)). as a cofactor.

The enzyme catalyses Endohydrolysis of (1-&gt;4)-beta-D-xylosidic linkages in xylans.. The protein operates within glycan degradation; xylan degradation. Its activity is regulated as follows. Completely inhibited by Hg(2+), unaffected by EDTA. Contributes to hydrolysis of hemicellulose, the major component of plant cell-walls. Hydrolyzes xylan to xylose and xylobiose. In Streptomyces sp, this protein is Endo-1,4-beta-xylanase A (xynAS9).